The following is a 471-amino-acid chain: Nuclear distribution protein PAC1 (471 aa).

Residues 9–41 (QAEELHKSMIAYLLSVNLSKSAAALREELADSV) enclose the LisH domain. Residues 60–87 (TSVVRLQKKIMDLESRNAALQQELDSAT) adopt a coiled-coil conformation. Polar residues predominate over residues 83-93 (LDSATPTSLSR). The interval 83 to 108 (LDSATPTSLSRRNQDPASWLPRAPAR) is disordered. 8 WD repeats span residues 113–154 (SHRG…RTIK), 156–196 (HTRA…KNIR), 200–247 (GHDH…CVKT), 250–289 (GHLDWVRDVFPSPDGRFLMSGGDDRVPRLLDASSGETKST), 292–352 (GHEH…IKTL), 354–393 (GHDNWIRALVFHPGGKYLLSVSDDKTLRCWDLSQECKCVR), 398–428 (AHGHFVSCIRWAPNIINESGLVSGEGGINGQ), and 429–467 (GTPSMNGVSISTTSKKEDTGGGGKIRCVIATGSVDMNVR). The tract at residues 424 to 449 (GINGQGTPSMNGVSISTTSKKEDTGG) is disordered. Residues 428 to 441 (QGTPSMNGVSISTT) are compositionally biased toward polar residues.

This sequence belongs to the WD repeat LIS1/nudF family. As to quaternary structure, self-associates. Interacts with NDL1 and dynein.

It localises to the cytoplasm. It is found in the cytoskeleton. The protein localises to the spindle pole. Its function is as follows. Positively regulates the activity of the minus-end directed microtubule motor protein dynein. May enhance dynein-mediated microtubule sliding by targeting dynein to the microtubule plus end. Required for nuclear migration during vegetative growth as well as development. Required for retrograde early endosome (EE) transport from the hyphal tip. Required for localization of dynein to the mitotic spindle poles. Recruits additional proteins to the dynein complex at SPBs. The polypeptide is Nuclear distribution protein PAC1 (Coccidioides posadasii (strain C735) (Valley fever fungus)).